We begin with the raw amino-acid sequence, 250 residues long: Putative (5-formylfuran-3-yl)methyl phosphate synthase (250 aa).

Lys-29 (schiff-base intermediate with substrate) is an active-site residue. Residue Lys-87 is the Proton acceptor of the active site.

The protein belongs to the MfnB family.

It carries out the reaction 2 D-glyceraldehyde 3-phosphate = 4-(hydroxymethyl)-2-furancarboxaldehyde phosphate + phosphate + 2 H2O. Catalyzes the formation of 4-(hydroxymethyl)-2-furancarboxaldehyde phosphate (4-HFC-P) from two molecules of glyceraldehyde-3-P (GA-3-P). The chain is Putative (5-formylfuran-3-yl)methyl phosphate synthase from Streptomyces griseus subsp. griseus (strain JCM 4626 / CBS 651.72 / NBRC 13350 / KCC S-0626 / ISP 5235).